The chain runs to 314 residues: MRFKGLDLNLLVALDALMTERNLTAAARQINLSQPAMSAAIARLRSYFRDELFTMRGRELVPTPGAEALAGPVREALLHIQLSIISRDAFDPTLSSRRFRVILSDFMTIVFFRRIVDRIAQEAPAVRFELLPFSDEPGELLRRGEVDFLILPELFMSSAHPKATLFDETLVCVGCRTNKQLLRPLTFEKYNSMGHVTAKFGRALRPNLEEWFLLEHGLKRRIEVVVQGFSLIPPILFDTGRIGTMPLRLARHFEKWMPLRIVEPPLPLPTFTEAVQWPAFHNTDPASIWMRRILLEEASNMGSADRKLPTRRRC.

The region spanning 6–63 (LDLNLLVALDALMTERNLTAAARQINLSQPAMSAAIARLRSYFRDELFTMRGRELVPT) is the HTH lysR-type domain. Positions 23 to 42 (LTAAARQINLSQPAMSAAIA) form a DNA-binding region, H-T-H motif.

The protein belongs to the LysR transcriptional regulatory family.

Its function is as follows. NodD regulates the expression of the nodABCFE genes which encode other nodulation proteins. NodD is also a negative regulator of its own expression. Binds flavonoids as inducers. This Bradyrhizobium elkanii protein is Nodulation protein D 1 (nodD1).